Consider the following 141-residue polypeptide: Large ribosomal subunit protein uL11 (141 aa).

The protein belongs to the universal ribosomal protein uL11 family. As to quaternary structure, part of the ribosomal stalk of the 50S ribosomal subunit. Interacts with L10 and the large rRNA to form the base of the stalk. L10 forms an elongated spine to which L12 dimers bind in a sequential fashion forming a multimeric L10(L12)X complex. Post-translationally, one or more lysine residues are methylated.

Functionally, forms part of the ribosomal stalk which helps the ribosome interact with GTP-bound translation factors. This Campylobacter jejuni subsp. jejuni serotype O:6 (strain 81116 / NCTC 11828) protein is Large ribosomal subunit protein uL11.